Reading from the N-terminus, the 452-residue chain is MADPASNVLRLHDTHLRDKRPFTPLDPENVRVYFCGPTVYDRAHLGNLRAMMCADILIRLLRTMYPRVTYVRNVTDVDDKINARAKENGEDISALTERTTQAFHEDLASLFILPPDIEPRATHHIDDMLEMIGRLVENGHAYVAEGHVLFAVRNFPSYGELSGRSLDDMIAGARVEVAPYKRDPGDFVLWKPSEPDLPGWDSPYGRGRPGWHIECSAMSHRYLGESFDIHGGGDDLLFPHHENERAQSMCCYPHGKFATHWVHNGMLLSNGEKMSKSLGNFFTIREVLDRSPAEPLRLLYLGAHYRSTLDFSWEKLEEARRVLDRLYRALERGNAQPGTALPAAVMDALCDDLNTPLAIAALHPLADAAMQGDQDAASSLLAAGKLLGLFNVTPAEWFQSGVDASAIEKLIEERLAARKSRDFARADAIRAQLAADGITLEDGPGGTTWRKA.

Residue Cys35 coordinates Zn(2+). A 'HIGH' region motif is present at residues 37–47; that stretch reads PTVYDRAHLGN. Residues Cys215, His240, and Glu244 each coordinate Zn(2+). Positions 273 to 277 match the 'KMSKS' region motif; sequence KMSKS. Lys276 provides a ligand contact to ATP.

Belongs to the class-I aminoacyl-tRNA synthetase family. As to quaternary structure, monomer. It depends on Zn(2+) as a cofactor.

It localises to the cytoplasm. The enzyme catalyses tRNA(Cys) + L-cysteine + ATP = L-cysteinyl-tRNA(Cys) + AMP + diphosphate. This chain is Cysteine--tRNA ligase, found in Gluconobacter oxydans (strain 621H) (Gluconobacter suboxydans).